Here is a 189-residue protein sequence, read N- to C-terminus: UPF0312 protein VC0395_0473/VC395_A0785 (189 aa).

Positions 1-22 (MKKTLMAVGLAAVISIPFAANA) are cleaved as a signal peptide.

Belongs to the UPF0312 family. Type 1 subfamily.

The protein localises to the periplasm. This is UPF0312 protein VC0395_0473/VC395_A0785 from Vibrio cholerae serotype O1 (strain ATCC 39541 / Classical Ogawa 395 / O395).